The sequence spans 305 residues: Glutaminase (305 aa).

Substrate-binding residues include Ser-61, Asn-113, Glu-158, Asn-165, Tyr-189, Tyr-241, and Val-259.

This sequence belongs to the glutaminase family. Homotetramer.

It carries out the reaction L-glutamine + H2O = L-glutamate + NH4(+). The polypeptide is Glutaminase (Clostridium botulinum (strain Kyoto / Type A2)).